The chain runs to 106 residues: Large ribosomal subunit protein P1A (106 aa).

Residue serine 2 is modified to N-acetylserine. The interval 73 to 106 (GGVAGGEAGEAEAEKEEEEAKEESDDDMGFGLFD) is disordered. Residues 81-100 (GEAEAEKEEEEAKEESDDDM) show a composition bias toward acidic residues. A Phosphoserine modification is found at serine 96.

The protein belongs to the eukaryotic ribosomal protein P1/P2 family. Component of the large ribosomal subunit (LSU). Mature yeast ribosomes consist of a small (40S) and a large (60S) subunit. The 40S small subunit contains 1 molecule of ribosomal RNA (18S rRNA) and 33 different proteins (encoded by 57 genes). The large 60S subunit contains 3 rRNA molecules (25S, 5.8S and 5S rRNA) and 46 different proteins (encoded by 81 genes). The 5 acidic ribosomal P-proteins form the stalk structure of the 60S subunit. They are organized as a pentameric complex in which uL10/P0 interacts with 2 heterodimers, P1A-P2B and P1B-P2A. In terms of processing, N-terminally acetylated by acetyltransferase NatA.

It is found in the cytoplasm. Component of the ribosome, a large ribonucleoprotein complex responsible for the synthesis of proteins in the cell. The small ribosomal subunit (SSU) binds messenger RNAs (mRNAs) and translates the encoded message by selecting cognate aminoacyl-transfer RNA (tRNA) molecules. The large subunit (LSU) contains the ribosomal catalytic site termed the peptidyl transferase center (PTC), which catalyzes the formation of peptide bonds, thereby polymerizing the amino acids delivered by tRNAs into a polypeptide chain. The nascent polypeptides leave the ribosome through a tunnel in the LSU and interact with protein factors that function in enzymatic processing, targeting, and the membrane insertion of nascent chains at the exit of the ribosomal tunnel. The sequence is that of Large ribosomal subunit protein P1A from Saccharomyces cerevisiae (strain ATCC 204508 / S288c) (Baker's yeast).